A 292-amino-acid chain; its full sequence is Cyclin-dependent kinase 5 (292 aa).

Residues 4 to 286 (YEKLEKIGEG…AEEALQHPYF (283 aa)) form the Protein kinase domain. ATP-binding positions include 10–18 (IGEGTYGTV) and Lys-33. Residue Tyr-15 is modified to Phosphotyrosine; by ABL1, EPHA4 and FYN. A Phosphothreonine modification is found at Thr-17. Lys-56 is subject to N6-acetyllysine. Ser-72 carries the phosphoserine modification. Asp-126 functions as the Proton acceptor in the catalytic mechanism. Ser-159 carries the post-translational modification Phosphoserine.

It belongs to the protein kinase superfamily. CMGC Ser/Thr protein kinase family. CDC2/CDKX subfamily. Heterodimer composed of a catalytic subunit CDK5 and a regulatory subunit CDK5R1 (p25) and macromolecular complex composed of at least CDK5, CDK5R1 (p35) and CDK5RAP1 or CDK5RAP2 or CDK5RAP3. Only the heterodimer shows kinase activity. Under neurotoxic stress and neuronal injury conditions, p35 is cleaved by calpain to generate p25 that hyperactivates CDK5, that becomes functionally disabled and often toxic. Found in a trimolecular complex with CABLES1 and ABL1. Interacts with CABLES1 and CABLES2. Interacts with AATK and GSTP1. Binds to HDAC1 when in complex with p25. Interaction with myristoylation p35 promotes CDK5 association with membranes. Both isoforms 1 and 2 interacts with beta-catenin/CTNNB1. Interacts with delta-catenin/CTNND2 and APEX1. Interacts with P53/TP53 in neurons. Interacts with EPHA4; may mediate the activation of NGEF by EPHA4. Interacts with PTK2/FAK1. The complex p35/CDK5 interacts with CLOCK. Interacts with HTR6. In terms of processing, phosphorylation on Tyr-15 by ABL1 and FYN, and on Ser-159 by casein kinase 1 promotes kinase activity. By contrast, phosphorylation at Thr-14 inhibits activity. Phosphorylation at Ser-159 is essential for maximal catalytic activity. As to expression, ubiquitously expressed. Accumulates in cortical neurons (at protein level). In terms of tissue distribution, expressed in the testis, skeletal muscle, colon, bone marrow and ovary.

It is found in the cytoplasm. Its subcellular location is the nucleus. The protein localises to the cell membrane. It localises to the perikaryon. The protein resides in the cell projection. It is found in the lamellipodium. Its subcellular location is the growth cone. The protein localises to the postsynaptic density. It localises to the synapse. It catalyses the reaction L-seryl-[protein] + ATP = O-phospho-L-seryl-[protein] + ADP + H(+). The catalysed reaction is L-threonyl-[protein] + ATP = O-phospho-L-threonyl-[protein] + ADP + H(+). Its activity is regulated as follows. Inhibited by 2-(1-ethyl-2-hydroxyethylamino)-6-benzylamino-9-isopropylpurine (roscovitine), 1-isopropyl-4-aminobenzyl-6-ether-linked benzimidazoles, resveratrol, AT-7519 and olomoucine. Activated by CDK5R1 (p35) and CDK5R2 (p39) during the development of the nervous system; degradation of CDK5R1 (p35) and CDK5R2 (p39) by proteasome result in down regulation of kinase activity, during this process, CDK5 phosphorylates p35 and induces its ubiquitination and subsequent degradation. Kinase activity is mainly determined by the amount of p35 available and subcellular location; reversible association to plasma membrane inhibits activity. Long-term inactivation as well as CDK5R1 (p25)-mediated hyperactivation of CDK5 triggers cell death. The pro-death activity of hyperactivated CDK5 is suppressed by membrane association of CDK5, via myristoylation of p35. Brain-derived neurotrophic factor, glial-derived neurotrophic factor, nerve growth factor (NGF), retinoic acid, laminin and neuregulin promote activity. Neurotoxicity enhances nuclear activity, thus leading to MEF2 phosphorylation and inhibition prior to apoptosis of cortical neurons. Repression by GSTP1 via p25/p35 translocation prevents neurodegeneration. Proline-directed serine/threonine-protein kinase essential for neuronal cell cycle arrest and differentiation and may be involved in apoptotic cell death in neuronal diseases by triggering abortive cell cycle re-entry. Interacts with D1 and D3-type G1 cyclins. Phosphorylates SRC, NOS3, VIM/vimentin, p35/CDK5R1, MEF2A, SIPA1L1, SH3GLB1, PXN, PAK1, MCAM/MUC18, SEPT5, SYN1, DNM1, AMPH, SYNJ1, CDK16, RAC1, RHOA, CDC42, TONEBP/NFAT5, MAPT/TAU, MAP1B, histone H1, p53/TP53, HDAC1, APEX1, PTK2/FAK1, huntingtin/HTT, ATM, MAP2, NEFH and NEFM. Regulates several neuronal development and physiological processes including neuronal survival, migration and differentiation, axonal and neurite growth, synaptogenesis, oligodendrocyte differentiation, synaptic plasticity and neurotransmission, by phosphorylating key proteins. Negatively regulates the CACNA1B/CAV2.2 -mediated Ca(2+) release probability at hippocampal neuronal soma and synaptic terminals. Activated by interaction with CDK5R1 (p35) and CDK5R2 (p39), especially in postmitotic neurons, and promotes CDK5R1 (p35) expression in an autostimulation loop. Phosphorylates many downstream substrates such as Rho and Ras family small GTPases (e.g. PAK1, RAC1, RHOA, CDC42) or microtubule-binding proteins (e.g. MAPT/TAU, MAP2, MAP1B), and modulates actin dynamics to regulate neurite growth and/or spine morphogenesis. Also phosphorylates exocytosis associated proteins such as MCAM/MUC18, SEPT5, SYN1, and CDK16/PCTAIRE1 as well as endocytosis associated proteins such as DNM1, AMPH and SYNJ1 at synaptic terminals. In the mature central nervous system (CNS), regulates neurotransmitter movements by phosphorylating substrates associated with neurotransmitter release and synapse plasticity; synaptic vesicle exocytosis, vesicles fusion with the presynaptic membrane, and endocytosis. Promotes cell survival by activating anti-apoptotic proteins BCL2 and STAT3, and negatively regulating of JNK3/MAPK10 activity. Phosphorylation of p53/TP53 in response to genotoxic and oxidative stresses enhances its stabilization by preventing ubiquitin ligase-mediated proteasomal degradation, and induces transactivation of p53/TP53 target genes, thus regulating apoptosis. Phosphorylation of p35/CDK5R1 enhances its stabilization by preventing calpain-mediated proteolysis producing p25/CDK5R1 and avoiding ubiquitin ligase-mediated proteasomal degradation. During aberrant cell-cycle activity and DNA damage, p25/CDK5 activity elicits cell-cycle activity and double-strand DNA breaks that precedes neuronal death by deregulating HDAC1. DNA damage triggered phosphorylation of huntingtin/HTT in nuclei of neurons protects neurons against polyglutamine expansion as well as DNA damage mediated toxicity. Phosphorylation of PXN reduces its interaction with PTK2/FAK1 in matrix-cell focal adhesions (MCFA) during oligodendrocytes (OLs) differentiation. Negative regulator of Wnt/beta-catenin signaling pathway. Activator of the GAIT (IFN-gamma-activated inhibitor of translation) pathway, which suppresses expression of a post-transcriptional regulon of proinflammatory genes in myeloid cells; phosphorylates the linker domain of glutamyl-prolyl tRNA synthetase (EPRS) in a IFN-gamma-dependent manner, the initial event in assembly of the GAIT complex. Phosphorylation of SH3GLB1 is required for autophagy induction in starved neurons. Phosphorylation of TONEBP/NFAT5 in response to osmotic stress mediates its rapid nuclear localization. MEF2 is inactivated by phosphorylation in nucleus in response to neurotoxin, thus leading to neuronal apoptosis. APEX1 AP-endodeoxyribonuclease is repressed by phosphorylation, resulting in accumulation of DNA damage and contributing to neuronal death. NOS3 phosphorylation down regulates NOS3-derived nitrite (NO) levels. SRC phosphorylation mediates its ubiquitin-dependent degradation and thus leads to cytoskeletal reorganization. May regulate endothelial cell migration and angiogenesis via the modulation of lamellipodia formation. Involved in dendritic spine morphogenesis by mediating the EFNA1-EPHA4 signaling. The complex p35/CDK5 participates in the regulation of the circadian clock by modulating the function of CLOCK protein: phosphorylates CLOCK at 'Thr-451' and 'Thr-461' and regulates the transcriptional activity of the CLOCK-BMAL1 heterodimer in association with altered stability and subcellular distribution. The sequence is that of Cyclin-dependent kinase 5 from Homo sapiens (Human).